A 511-amino-acid polypeptide reads, in one-letter code: Myrosinase 5 (511 aa).

A signal peptide spans 1-23; it reads MAIPKAHYSLAVLVLLFVVVSSS. Disulfide bonds link Cys-31/Cys-450, Cys-39/Cys-445, and Cys-230/Cys-233. N-linked (GlcNAc...) asparagine glycans are attached at residues Asn-46 and Asn-53. Residues Gln-64, His-165, and 210–211 contribute to the a beta-D-glucoside site; that span reads NQ. An N-linked (GlcNAc...) asparagine glycan is attached at Asn-222. The a beta-D-glucoside site is built by Tyr-351 and Glu-418. Glu-418 serves as the catalytic Nucleophile. Asn-428 is a glycosylation site (N-linked (GlcNAc...) asparagine). A beta-D-glucoside contacts are provided by residues Trp-467, 474–475, and Phe-483; that span reads EF. An N-linked (GlcNAc...) asparagine glycan is attached at Asn-489.

Belongs to the glycosyl hydrolase 1 family. In terms of tissue distribution, specifically expressed in roots.

It carries out the reaction a thioglucoside + H2O = a sugar + a thiol.. It catalyses the reaction Hydrolysis of terminal, non-reducing beta-D-glucosyl residues with release of beta-D-glucose.. Its function is as follows. Hydrolyzes sinigrin and, with lower efficiency, p-nitrophenyl beta-D-glucoside. This is Myrosinase 5 from Arabidopsis thaliana (Mouse-ear cress).